A 2315-amino-acid chain; its full sequence is Receptor-type tyrosine-protein phosphatase zeta (2315 aa).

The first 24 residues, 1–24 (MRILKRFLACIQLLCVCRLDWANG), serve as a signal peptide directing secretion. Over 25 to 1636 (YYRQQRKLVE…LAEGLESEKK (1612 aa)) the chain is Extracellular. An Alpha-carbonic anhydrase domain is found at 36-300 (IGWSYTGALN…KFSRQVFSSY (265 aa)). 2 cysteine pairs are disulfide-bonded: Cys-56-Cys-240 and Cys-133-Cys-264. Residues Asn-105, Asn-134, Asn-223, Asn-232, Asn-324, and Asn-381 are each glycosylated (N-linked (GlcNAc...) asparagine). Residues 314–413 (EPENVQADPE…LIVDMPTDNP (100 aa)) form the Fibronectin type-III domain. Disordered regions lie at residues 442–462 (IVNP…PQIS) and 477–507 (AKTN…SQPV). Positions 496 to 507 (PNTSLNSTSQPV) are enriched in polar residues. N-linked (GlcNAc...) asparagine glycans are attached at residues Asn-497, Asn-501, and Asn-552. Ser-587 carries an O-linked (Xyl...) (chondroitin sulfate) serine glycan. Residues Asn-602 and Asn-629 are each glycosylated (N-linked (GlcNAc...) asparagine). Residues 628–650 (RNASEDSTSSGSEESLKDPSMEG) are disordered. Ser-637 carries the phosphoserine; alternate modification. A glycan (O-linked (Xyl...) (chondroitin sulfate) serine; alternate) is linked at Ser-637. Ser-639 is subject to Phosphoserine. The N-linked (GlcNAc...) asparagine glycan is linked to Asn-677. O-linked (Xyl...) (chondroitin sulfate) serine glycosylation occurs at Ser-997. 4 N-linked (GlcNAc...) asparagine glycosylation sites follow: Asn-1017, Asn-1050, Asn-1082, and Asn-1122. Residues 1123 to 1138 (FSVQPTHTVSQASGDT) show a composition bias toward polar residues. 4 disordered regions span residues 1123-1160 (FSVQ…SSEM), 1397-1523 (KATS…EEND), 1543-1572 (LTSD…SFAD), and 1584-1621 (AGDS…NSSH). Low complexity predominate over residues 1145–1159 (SANSEPASSDPASSE). Acidic residues predominate over residues 1417 to 1432 (EDGDTDDDGDDDDDDR). Positions 1450-1465 (ESQEKVMNDSDTHENS) are enriched in basic and acidic residues. Asn-1457 carries an N-linked (GlcNAc...) asparagine glycan. Polar residues-rich tracts occupy residues 1466-1479 (LMDQ…SLSE) and 1487-1513 (VTSV…GLSQ). Residues Ser-1549 and Ser-1551 are each glycosylated (O-linked (Xyl...) (chondroitin sulfate) serine). Polar residues-rich tracts occupy residues 1554-1572 (GTSD…SFAD) and 1593-1606 (FPQS…SENS). Asn-1562 carries an N-linked (GlcNAc...) asparagine glycan. An N-linked (GlcNAc...) asparagine glycan is attached at Asn-1618. Residues 1637–1662 (AVIPLVIVSALTFICLVVLVGILIYW) traverse the membrane as a helical segment. Residues 1663–2315 (RKCFQTAHFY…NIAESLESLV (653 aa)) lie on the Cytoplasmic side of the membrane. Phosphothreonine is present on residues Thr-1684 and Thr-1687. 2 consecutive Tyrosine-protein phosphatase domains span residues 1717–1992 (FTEE…LVEA) and 2023–2282 (LEKQ…ILSL). Residues Asp-1901, 1933–1939 (CSAGVGR), and Gln-1977 contribute to the substrate site. The Phosphocysteine intermediate role is filled by Cys-1933. Ser-2055 is modified (phosphoserine).

The protein belongs to the protein-tyrosine phosphatase family. Receptor class 5 subfamily. As to quaternary structure, the carbonic-anhydrase like domain interacts with CNTN1 (contactin). Interacts with PTN. Interaction with PTN promotes formation of homooligomers; oligomerization impairs phosphatase activity. Interacts (via chondroitin sulfate chains) with MDK (via C-terminal); this interaction is inhibited by PTN; this interaction promotes neuronal migration. As to expression, specifically expressed in the central nervous system, where it is localized in the Purkinje cell layer of the cerebellum, the dentate gyrus, and the subependymal layer of the anterior horn of the lateral ventricle. Developmentally regulated in the brain.

It is found in the cell membrane. The protein resides in the secreted. It catalyses the reaction O-phospho-L-tyrosyl-[protein] + H2O = L-tyrosyl-[protein] + phosphate. Protein tyrosine phosphatase that negatively regulates oligodendrocyte precursor proliferation in the embryonic spinal cord. Required for normal differentiation of the precursor cells into mature, fully myelinating oligodendrocytes. May play a role in protecting oligondendrocytes against apoptosis. May play a role in the establishment of contextual memory, probably via the dephosphorylation of proteins that are part of important signaling cascades. This Homo sapiens (Human) protein is Receptor-type tyrosine-protein phosphatase zeta (PTPRZ1).